The following is a 620-amino-acid chain: Ion-translocating oxidoreductase complex subunit C (620 aa).

2 4Fe-4S ferredoxin-type domains span residues 366-397 (TEMG…QQLY) and 407-436 (KARN…VQYY). Residues Cys-377, Cys-380, Cys-383, Cys-387, Cys-416, Cys-419, Cys-422, and Cys-426 each contribute to the [4Fe-4S] cluster site.

This sequence belongs to the 4Fe4S bacterial-type ferredoxin family. RnfC subfamily. As to quaternary structure, the complex is composed of six subunits: RnfA, RnfB, RnfC, RnfD, RnfE and RnfG. The cofactor is [4Fe-4S] cluster.

The protein resides in the cell inner membrane. Functionally, part of a membrane-bound complex that couples electron transfer with translocation of ions across the membrane. This chain is Ion-translocating oxidoreductase complex subunit C, found in Yersinia pestis bv. Antiqua (strain Antiqua).